The sequence spans 379 residues: Botryococcene C-methyltransferase (379 aa).

Residues 17–37 (LLTWKGAAGLAAAVALGYIII) traverse the membrane as a helical segment.

It belongs to the class I-like SAM-binding methyltransferase superfamily. Erg6/SMT family.

It is found in the microsome membrane. The catalysed reaction is C30 botryococcene + 2 S-adenosyl-L-methionine = 3,20-dimethyl-1,2,21,22-tetradehydro-2,3,20,21-tetrahydrobotryococcene + 2 S-adenosyl-L-homocysteine + 2 H(+). Functionally, converts botryococcene to mono- and dimethyl derivatives, but not to tri- and tetramethylated products. Unable to methylate cycloartenol, zymosterol or lanosterol, but can also use squalene as substrate. Methylates both C-3 and C22 positions, but only C-3 position in monomethylated squalenes. In contrast, monomethylated botryococcene occured mainly at the C-20 position yielding showacene, but also at the C-3 position yielding isoshowacene. The polypeptide is Botryococcene C-methyltransferase (TMT-3) (Botryococcus braunii (Green alga)).